Consider the following 583-residue polypeptide: Pentatricopeptide repeat-containing protein At2g33760 (583 aa).

PPR repeat units lie at residues 71-105 (DDFL…NVSP), 106-140 (SNYT…GFGL), 141-171 (DTYV…MPEK), 172-206 (SIVA…GFEP), 207-241 (DSAT…GLDL), 242-276 (NVKL…NVAA), 277-303 (WTAM…MEDD), 309-339 (NNVT…MTKS), and 345-379 (GVEH…GKAT). Residues 383–458 (LWTAMLGACK…QVGYSVIEVE (76 aa)) are type E motif. The type E(+) motif stretch occupies residues 459-489 (NKTYMFSMGDESHQETGEIYRYLETLISRCK). The segment at 490–583 (EIGYAPVSEE…NGSCSCLDYW (94 aa)) is type DYW motif.

This sequence belongs to the PPR family. PCMP-H subfamily.

In Arabidopsis thaliana (Mouse-ear cress), this protein is Pentatricopeptide repeat-containing protein At2g33760 (PCMP-H6).